Here is a 120-residue protein sequence, read N- to C-terminus: Holo-[acyl-carrier-protein] synthase (120 aa).

Residues Asp-8 and Glu-60 each contribute to the Mg(2+) site.

The protein belongs to the P-Pant transferase superfamily. AcpS family. The cofactor is Mg(2+).

Its subcellular location is the cytoplasm. It catalyses the reaction apo-[ACP] + CoA = holo-[ACP] + adenosine 3',5'-bisphosphate + H(+). In terms of biological role, transfers the 4'-phosphopantetheine moiety from coenzyme A to a Ser of acyl-carrier-protein. In Anaplasma marginale (strain Florida), this protein is Holo-[acyl-carrier-protein] synthase.